Here is a 357-residue protein sequence, read N- to C-terminus: Protein RecA (357 aa).

71–78 (GPESSGKT) lines the ATP pocket.

This sequence belongs to the RecA family.

The protein localises to the cytoplasm. Functionally, can catalyze the hydrolysis of ATP in the presence of single-stranded DNA, the ATP-dependent uptake of single-stranded DNA by duplex DNA, and the ATP-dependent hybridization of homologous single-stranded DNAs. It interacts with LexA causing its activation and leading to its autocatalytic cleavage. This is Protein RecA from Ehrlichia canis (strain Jake).